The following is a 684-amino-acid chain: Fidgetin-like protein 2 (684 aa).

Polar residues predominate over residues 27 to 41; that stretch reads PEQHLDVSSTTSSPA. Disordered regions lie at residues 27-48, 99-179, and 292-403; these read PEQH…ELYS, PGAF…PHSS, and LDEE…SDPM. The span at 160–179 shows a compositional bias: low complexity; it reads SNLSDSGYSGSSSCSGPHSS. ATP is bound at residue alanine 431.

The protein belongs to the AAA ATPase family. Requires Mg(2+) as cofactor. Highly expressed in vascular endothelial cells and neuronal cells.

Its subcellular location is the cytoplasm. It localises to the cell cortex. It catalyses the reaction ATP + H2O = ADP + phosphate + H(+). Its function is as follows. Microtubule-severing enzyme that negatively regulates cell migration and wound healing. In migrating cells, targets dynamic microtubules (MTs) at the leading edge and severs them, thereby suppressing motility. Negative regulator of axon regeneration that suppresses axonal growth by selectively severing dynamic MTs in the distal axon shaft and growth cone. Contributes to proper cell branching during endothelial and neuronal development. In Danio rerio (Zebrafish), this protein is Fidgetin-like protein 2 (fignl2).